Consider the following 371-residue polypeptide: GDP-mannose 3,5-epimerase 2 (371 aa).

Residues 29 to 55 (GAGG…SDWK), aspartate 53, and aspartate 73 each bind NAD(+). Substrate-binding positions include glycine 98 and 138–140 (SAC). NAD(+)-binding residues include tyrosine 168 and lysine 172. Tyrosine 168 (proton acceptor) is an active-site residue. Residues asparagine 197, 210–212 (EKA), lysine 219, 235–237 (QTR), arginine 300, and serine 350 contribute to the substrate site.

The protein belongs to the NAD(P)-dependent epimerase/dehydratase family. Requires NAD(+) as cofactor.

The enzyme catalyses GDP-alpha-D-mannose = GDP-beta-L-gulose. The catalysed reaction is GDP-beta-L-gulose = GDP-beta-L-galactose. It participates in cofactor biosynthesis; L-ascorbate biosynthesis via GDP-alpha-D-mannose pathway; L-ascorbate from GDP-alpha-D-mannose: step 1/5. Catalyzes a reversible epimerization of GDP-D-mannose that precedes the committed step in the biosynthesis of vitamin C (L-ascorbate), resulting in the hydrolysis of the highly energetic glycosyl-pyrophosphoryl linkage. Able to catalyze 2 distinct epimerization reactions and can release both GDP-L-galactose and GDP-L-gulose from GDP-mannose. The chain is GDP-mannose 3,5-epimerase 2 (GME-2) from Oryza sativa subsp. japonica (Rice).